Here is a 481-residue protein sequence, read N- to C-terminus: UDP-N-acetylmuramate--L-alanine ligase (481 aa).

115 to 121 serves as a coordination point for ATP; it reads GTHGKTT.

It belongs to the MurCDEF family.

It localises to the cytoplasm. The catalysed reaction is UDP-N-acetyl-alpha-D-muramate + L-alanine + ATP = UDP-N-acetyl-alpha-D-muramoyl-L-alanine + ADP + phosphate + H(+). It participates in cell wall biogenesis; peptidoglycan biosynthesis. Functionally, cell wall formation. This Granulibacter bethesdensis (strain ATCC BAA-1260 / CGDNIH1) protein is UDP-N-acetylmuramate--L-alanine ligase.